A 99-amino-acid chain; its full sequence is MNKTEFIAFMTDHGHNHKHASHKTLTKAEAEKALNLVLDSVISAIKSHHNINITGFGSFEIHHRKAREGRNPKTGAKMKIDAYNQPTFRAGRKMKEACN.

A disordered region spans residues 67-86 (REGRNPKTGAKMKIDAYNQP).

This sequence belongs to the bacterial histone-like protein family. In terms of assembly, homodimer.

In terms of biological role, histone-like DNA-binding protein which is capable of wrapping DNA to stabilize it, and thus to prevent its denaturation under extreme environmental conditions. The sequence is that of DNA-binding protein HU (hup) from Rickettsia conorii (strain ATCC VR-613 / Malish 7).